Here is an 85-residue protein sequence, read N- to C-terminus: Small proline-rich protein 2D (85 aa).

Residues methionine 1–proline 11 show a composition bias toward low complexity. Residues methionine 1–proline 20 form a disordered region. Tandem repeats lie at residues lysine 21–proline 29, leucine 30–proline 38, proline 39–proline 47, and proline 48–glutamate 56. Residues lysine 21–glutamate 56 are 4 X 9 AA approximate tandem repeats. The tract at residues proline 57–lysine 85 is disordered.

The protein belongs to the cornifin (SPRR) family. As to expression, expressed in uterus.

It localises to the cytoplasm. Its function is as follows. Cross-linked envelope protein of keratinocytes. It is a keratinocyte protein that first appears in the cell cytosol, but ultimately becomes cross-linked to membrane proteins by transglutaminase. All that results in the formation of an insoluble envelope beneath the plasma membrane. This Mus musculus (Mouse) protein is Small proline-rich protein 2D (Sprr2d).